The sequence spans 194 residues: Probable thymidylate kinase (194 aa).

9–16 (GIDGVGKS) is a binding site for ATP.

Belongs to the thymidylate kinase family.

The enzyme catalyses dTMP + ATP = dTDP + ADP. In Methanopyrus kandleri (strain AV19 / DSM 6324 / JCM 9639 / NBRC 100938), this protein is Probable thymidylate kinase.